Consider the following 304-residue polypeptide: Aspartate carbamoyltransferase catalytic subunit (304 aa).

2 residues coordinate carbamoyl phosphate: Arg56 and Thr57. Lys85 contacts L-aspartate. 3 residues coordinate carbamoyl phosphate: Arg106, His134, and Gln137. Positions 167 and 226 each coordinate L-aspartate. 2 residues coordinate carbamoyl phosphate: Leu265 and Pro266.

It belongs to the aspartate/ornithine carbamoyltransferase superfamily. ATCase family. Heterooligomer of catalytic and regulatory chains.

The enzyme catalyses carbamoyl phosphate + L-aspartate = N-carbamoyl-L-aspartate + phosphate + H(+). Its pathway is pyrimidine metabolism; UMP biosynthesis via de novo pathway; (S)-dihydroorotate from bicarbonate: step 2/3. Catalyzes the condensation of carbamoyl phosphate and aspartate to form carbamoyl aspartate and inorganic phosphate, the committed step in the de novo pyrimidine nucleotide biosynthesis pathway. This Picrophilus torridus (strain ATCC 700027 / DSM 9790 / JCM 10055 / NBRC 100828 / KAW 2/3) protein is Aspartate carbamoyltransferase catalytic subunit.